Reading from the N-terminus, the 386-residue chain is tRNA N6-adenosine threonylcarbamoyltransferase (386 aa).

The a divalent metal cation site is built by H141, H145, and Y162. Substrate contacts are provided by residues 162 to 166 (YVSGG), D194, G209, E213, and N315. D344 contacts a divalent metal cation.

This sequence belongs to the KAE1 / TsaD family. In terms of assembly, component of the EKC/KEOPS complex composed of at least BUD32, CGI121, GON7, KAE1 and PCC1; the whole complex dimerizes. The cofactor is a divalent metal cation.

The protein resides in the cytoplasm. The protein localises to the nucleus. It carries out the reaction L-threonylcarbamoyladenylate + adenosine(37) in tRNA = N(6)-L-threonylcarbamoyladenosine(37) in tRNA + AMP + H(+). Functionally, component of the EKC/KEOPS complex that is required for the formation of a threonylcarbamoyl group on adenosine at position 37 (t(6)A37) in tRNAs that read codons beginning with adenine. The complex is probably involved in the transfer of the threonylcarbamoyl moiety of threonylcarbamoyl-AMP (TC-AMP) to the N6 group of A37. KAE1 likely plays a direct catalytic role in this reaction, but requires other protein(s) of the complex to fulfill this activity. The EKC/KEOPS complex also promotes both telomere uncapping and telomere elongation. The complex is required for efficient recruitment of transcriptional coactivators. The chain is tRNA N6-adenosine threonylcarbamoyltransferase from Saccharomyces cerevisiae (strain ATCC 204508 / S288c) (Baker's yeast).